We begin with the raw amino-acid sequence, 272 residues long: Catechol O-methyltransferase (272 aa).

The Cytoplasmic segment spans residues 1–6 (MLEAPP). The chain crosses the membrane as a helical; Signal-anchor for type II membrane protein span at residues 7 to 27 (LLLVAGGVGLALLALRWLATT). Residues 28-272 (DLQFFGRAFI…YKGLSGPARP (245 aa)) are Extracellular-facing. S-adenosyl-L-methionine-binding positions include Val-93, Glu-115, Ser-123, Glu-141, 168–171 (GASQ), Ser-170, and Asp-192. Asp-192 contributes to the Mg(2+) binding site. Residue Lys-195 participates in substrate binding. Mg(2+)-binding residues include Asp-220 and Asn-221. Substrate contacts are provided by Asn-221 and Glu-250. Phosphoserine is present on Ser-267.

The protein belongs to the class I-like SAM-binding methyltransferase superfamily. Cation-dependent O-methyltransferase family. The cofactor is Mg(2+).

The protein resides in the cytoplasm. It is found in the cell membrane. The catalysed reaction is a catechol + S-adenosyl-L-methionine = a guaiacol + S-adenosyl-L-homocysteine + H(+). It catalyses the reaction 2-hydroxyestrone + S-adenosyl-L-methionine = 2-hydroxy-3-methoxy-estrone + S-adenosyl-L-homocysteine + H(+). It carries out the reaction 4-hydroxyestrone + S-adenosyl-L-methionine = 4-methoxyestrone + S-adenosyl-L-homocysteine + H(+). The enzyme catalyses 2-hydroxyestrone + S-adenosyl-L-methionine = 2-methoxyestrone + S-adenosyl-L-homocysteine + H(+). The catalysed reaction is 4-hydroxy-17beta-estradiol + S-adenosyl-L-methionine = 4-methoxy-17beta-estradiol + S-adenosyl-L-homocysteine + H(+). It catalyses the reaction 2-hydroxy-17beta-estradiol + S-adenosyl-L-methionine = 2-hydroxy-3-methoxy-17beta-estradiol + S-adenosyl-L-homocysteine + H(+). It carries out the reaction 2-hydroxy-17beta-estradiol + S-adenosyl-L-methionine = 2-methoxy-17beta-estradiol + S-adenosyl-L-homocysteine + H(+). Functionally, catalyzes the O-methylation, and thereby the inactivation, of catecholamine neurotransmitters and catechol hormones. Also shortens the biological half-lives of certain neuroactive drugs, like L-DOPA, alpha-methyl DOPA and isoproterenol. The polypeptide is Catechol O-methyltransferase (COMT) (Bos taurus (Bovine)).